A 128-amino-acid polypeptide reads, in one-letter code: Mediator of RNA polymerase II transcription subunit 31-A (128 aa).

The protein belongs to the Mediator complex subunit 31 family. As to quaternary structure, component of the Mediator complex.

It localises to the nucleus. Its function is as follows. Component of the Mediator complex, a coactivator involved in the regulated transcription of nearly all RNA polymerase II-dependent genes. Mediator functions as a bridge to convey information from gene-specific regulatory proteins to the basal RNA polymerase II transcription machinery. Mediator is recruited to promoters by direct interactions with regulatory proteins and serves as a scaffold for the assembly of a functional preinitiation complex with RNA polymerase II and the general transcription factors. This Xenopus laevis (African clawed frog) protein is Mediator of RNA polymerase II transcription subunit 31-A (med31-a).